Consider the following 259-residue polypeptide: Pimeloyl-[acyl-carrier protein] methyl ester esterase (259 aa).

The 226-residue stretch at 16 to 241 (FVMLHGWGMN…QSAHVPFISH (226 aa)) folds into the AB hydrolase-1 domain. Substrate-binding positions include tryptophan 22, 82–83 (SM), and 143–147 (FLLLQ). Serine 82 functions as the Nucleophile in the catalytic mechanism. Active-site residues include aspartate 207 and histidine 235. Residue histidine 235 participates in substrate binding.

This sequence belongs to the AB hydrolase superfamily. Carboxylesterase BioH family. Monomer.

It localises to the cytoplasm. It catalyses the reaction 6-carboxyhexanoyl-[ACP] methyl ester + H2O = 6-carboxyhexanoyl-[ACP] + methanol + H(+). Its pathway is cofactor biosynthesis; biotin biosynthesis. Functionally, the physiological role of BioH is to remove the methyl group introduced by BioC when the pimeloyl moiety is complete. It allows to synthesize pimeloyl-ACP via the fatty acid synthetic pathway through the hydrolysis of the ester bonds of pimeloyl-ACP esters. This is Pimeloyl-[acyl-carrier protein] methyl ester esterase from Hamiltonella defensa subsp. Acyrthosiphon pisum (strain 5AT).